Reading from the N-terminus, the 35-residue chain is Cytochrome b6-f complex subunit 5 (35 aa).

The helical transmembrane segment at 5–25 threads the bilayer; the sequence is LLTGIVLGSIFITLLGLLAAA.

Belongs to the PetG family. In terms of assembly, the 4 large subunits of the cytochrome b6-f complex are cytochrome b6, subunit IV (17 kDa polypeptide, PetD), cytochrome f and the Rieske protein, while the 4 small subunits are PetG, PetL, PetM and PetN. The complex functions as a dimer.

It localises to the plastid. The protein resides in the chloroplast thylakoid membrane. In terms of biological role, component of the cytochrome b6-f complex, which mediates electron transfer between photosystem II (PSII) and photosystem I (PSI), cyclic electron flow around PSI, and state transitions. PetG is required for either the stability or assembly of the cytochrome b6-f complex. The sequence is that of Cytochrome b6-f complex subunit 5 from Cyanidium caldarium (Red alga).